The chain runs to 302 residues: Probable 2-(5''-triphosphoribosyl)-3'-dephosphocoenzyme-A synthase (302 aa).

The protein belongs to the CitG/MdcB family.

It catalyses the reaction 3'-dephospho-CoA + ATP = 2'-(5''-triphospho-alpha-D-ribosyl)-3'-dephospho-CoA + adenine. This chain is Probable 2-(5''-triphosphoribosyl)-3'-dephosphocoenzyme-A synthase, found in Salmonella gallinarum (strain 287/91 / NCTC 13346).